A 222-amino-acid polypeptide reads, in one-letter code: Methylthioribulose-1-phosphate dehydratase (222 aa).

The Zn(2+) site is built by histidine 94 and histidine 96.

This sequence belongs to the aldolase class II family. MtnB subfamily. It depends on Zn(2+) as a cofactor.

It catalyses the reaction 5-(methylsulfanyl)-D-ribulose 1-phosphate = 5-methylsulfanyl-2,3-dioxopentyl phosphate + H2O. Its pathway is amino-acid biosynthesis; L-methionine biosynthesis via salvage pathway; L-methionine from S-methyl-5-thio-alpha-D-ribose 1-phosphate: step 2/6. In terms of biological role, catalyzes the dehydration of methylthioribulose-1-phosphate (MTRu-1-P) into 2,3-diketo-5-methylthiopentyl-1-phosphate (DK-MTP-1-P). This is Methylthioribulose-1-phosphate dehydratase from Yersinia pseudotuberculosis serotype IB (strain PB1/+).